The primary structure comprises 366 residues: Uroporphyrinogen decarboxylase (366 aa).

Substrate is bound by residues 28–32 (RQAGR), Asp-78, Tyr-160, Thr-215, and His-333.

This sequence belongs to the uroporphyrinogen decarboxylase family. In terms of assembly, homodimer.

It is found in the cytoplasm. It carries out the reaction uroporphyrinogen III + 4 H(+) = coproporphyrinogen III + 4 CO2. It participates in porphyrin-containing compound metabolism; protoporphyrin-IX biosynthesis; coproporphyrinogen-III from 5-aminolevulinate: step 4/4. Functionally, catalyzes the decarboxylation of four acetate groups of uroporphyrinogen-III to yield coproporphyrinogen-III. This is Uroporphyrinogen decarboxylase from Paraburkholderia xenovorans (strain LB400).